We begin with the raw amino-acid sequence, 114 residues long: UPF0339 protein plu2779 (114 aa).

Tandem repeats lie at residues 11 to 59 (TKNK…NFEI) and 62 to 110 (NKSG…VRDL).

The protein belongs to the UPF0339 family. Duplicated subfamily.

The protein is UPF0339 protein plu2779 of Photorhabdus laumondii subsp. laumondii (strain DSM 15139 / CIP 105565 / TT01) (Photorhabdus luminescens subsp. laumondii).